The chain runs to 2188 residues: Phenolphthiocerol/phthiocerol polyketide synthase subunit C (2188 aa).

One can recognise a Ketosynthase family 3 (KS3) domain in the interval 34–462; that stretch reads SEPIAVIGMG…GTNAHVVIEQ (429 aa). Residues Cys-210, His-345, and His-384 each act as for beta-ketoacyl synthase activity in the active site. The acyltransferase stretch occupies residues 572 to 890; that stretch reads VFVYSGRGSQ…NLNTTHTTHP (319 aa). The For malonyltransferase activity role is filled by Ser-660. The N-terminal hotdog fold stretch occupies residues 928 to 1050; sequence HPLLGVGVTD…ATVARAEPLA (123 aa). The interval 928 to 1093 is dehydratase; it reads HPLLGVGVTD…QQHGPAFQGI (166 aa). The PKS/mFAS DH domain maps to 928 to 1223; sequence HPLLGVGVTD…MAVLGSGSGA (296 aa). His-959 functions as the Proton acceptor; for dehydratase activity in the catalytic mechanism. The C-terminal hotdog fold stretch occupies residues 1067–1223; that stretch reads EDQLDPDDLY…MAVLGSGSGA (157 aa). Asp-1129 acts as the Proton donor; for dehydratase activity in catalysis. The segment at 1467-1778 is enoylreductase; the sequence is GRLDALNVHE…SGKHTGKIVI (312 aa). The interval 1802-1981 is beta-ketoacyl reductase; that stretch reads GGYLIVGGMG…GINWGPWADV (180 aa). NADP(+) is bound at residue 1803 to 1848; that stretch reads GYLIVGGMGGLGFVVARWLAEQGAGLIVLNGRSAPSDEVAAAIAEL. One can recognise a Carrier domain in the interval 2069–2145; it reads ERPGHLASAI…DLATALCERM (77 aa). Ser-2105 carries the post-translational modification O-(pantetheine 4'-phosphoryl)serine.

As to quaternary structure, homodimer. The cofactor is NADP(+). Requires pantetheine 4'-phosphate as cofactor.

The catalysed reaction is icosanoyl-[(phenol)carboxyphthiodiolenone synthase] + 2 (S)-methylmalonyl-CoA + 3 malonyl-CoA + 5 NADPH + 10 H(+) = C32-carboxyphthiodiolenone-[(phenol)carboxyphthiodiolenone synthase] + 5 CO2 + 5 NADP(+) + 5 CoA + 2 H2O. The enzyme catalyses docosanoyl-[(phenol)carboxyphthiodiolenone synthase] + 2 (S)-methylmalonyl-CoA + 3 malonyl-CoA + 5 NADPH + 10 H(+) = C34-carboxyphthiodiolenone-[(phenol)carboxyphthiodiolenone synthase] + 5 CO2 + 5 NADP(+) + 5 CoA + 2 H2O. It carries out the reaction 17-(4-hydroxyphenyl)heptadecanoyl-[(phenol)carboxyphthiodiolenone synthase] + 2 (S)-methylmalonyl-CoA + 3 malonyl-CoA + 5 NADPH + 10 H(+) = C35-(phenol)carboxyphthiodiolenone-[(phenol)carboxyphthiodiolenone synthase] + 5 CO2 + 5 NADP(+) + 5 CoA + 2 H2O. It catalyses the reaction 19-(4-hydroxyphenyl)nonadecanoyl-[(phenol)carboxyphthiodiolenone synthase] + 2 (S)-methylmalonyl-CoA + 3 malonyl-CoA + 5 NADPH + 10 H(+) = C37-(phenol)carboxyphthiodiolenone-[(phenol)carboxyphthiodiolenone synthase] + 5 CO2 + 5 NADP(+) + 5 CoA + 2 H2O. Its pathway is lipid metabolism; fatty acid biosynthesis. Part of the PpsABCDE complex involved in the biosynthesis of the lipid core common to phthiocerols and phenolphthiocerols by successive additions of malonyl-CoA or methylmalonyl-CoA extender units. PpsA can accept as substrate the activated forms of either icosanoyl (C20), docosanoyl (C22) or lignoceroyl (C24) groups from FadD26, or a (4-hydroxyphenyl)-C17 or (4-hydroxyphenyl)-C19 fatty acyl from FadD29. PpsA initiates the biosynthesis and extends its substrate using a malonyl-CoA extender unit. The PpsB and PpsC proteins add the second and third malonyl-CoA extender units. PpsD adds an (R)-methylmalonyl unit and PpsE adds a second (R)-methylmalonyl unit. The incorporation of the methylmalonyl units results in formation of two branched methyl groups in the elongated product. This is Phenolphthiocerol/phthiocerol polyketide synthase subunit C (ppsC) from Mycobacterium bovis (strain ATCC BAA-935 / AF2122/97).